A 450-amino-acid polypeptide reads, in one-letter code: Crinkler effector protein 63 (450 aa).

An N-terminal signal peptide occupies residues 1–17 (MVKLFCAIVGAAGSAFP). An LQLFLAK domain region spans residues 18 to 55 (VDIDAGQSAGDLKDAIKAKNPATITCDAKDLQLSLAKT). Residues 58-117 (GAWLPDDDQAALDLEDGKVHEDIQALIDGEKMKATWTIEDVLTANNMTKRKGRAPKSRQI) are DWL domain. N-linked (GlcNAc...) asparagine glycosylation occurs at Asn103. The short motif at 118–124 (HVLVVVP) is the HVLVXXP motif element. The segment at 125–450 (EGAFGSASET…RSIPTFSYFS (326 aa)) is effector domain. A Nuclear localization signal (NLS) motif is present at residues 218–224 (QRKRYRR). N-linked (GlcNAc...) asparagine glycosylation occurs at Asn342.

It belongs to the Crinkler effector family. As to quaternary structure, forms a homodimer via an inverted association manner. Forms heterodimers with CRN79 and CRN115.

It is found in the secreted. The protein localises to the host nucleus. It localises to the host nucleoplasm. In terms of biological role, secreted effector that, with CRN115, is critical to pathogenesis by modulating host defenses. Induces cell death in plant host cells. Suppresses callose deposition and affects expression of defense-related genes including two salicylic acid (SA) signal-induced and antimicrobial PR genes (PR1 and PR2), and genes involved in jasmonic acid (JA)/ethylene (ET)-mediated defense pathway (ERF1, ORA59, PDF1.2). CRN115 and CRN63 may share the same molecular host targets that are involved in the cell death signal transduction pathway and that their differential activities are dependent on plant nuclear localization or not. Does not affect MAPK activation and BIK1 phosphorylation and acts downstream of the MAPK cascades in PTI signaling. The chain is Crinkler effector protein 63 from Phytophthora sojae (strain P6497) (Soybean stem and root rot agent).